We begin with the raw amino-acid sequence, 220 residues long: Phosphoribosylformylglycinamidine synthase subunit PurQ (220 aa).

The Glutamine amidotransferase type-1 domain occupies 2 to 220 (RVGVVVFPGS…LRSVLAGAKV (219 aa)). Cysteine 85 acts as the Nucleophile in catalysis. Active-site residues include histidine 193 and glutamate 195.

As to quaternary structure, part of the FGAM synthase complex composed of 1 PurL, 1 PurQ and 2 PurS subunits.

Its subcellular location is the cytoplasm. It catalyses the reaction N(2)-formyl-N(1)-(5-phospho-beta-D-ribosyl)glycinamide + L-glutamine + ATP + H2O = 2-formamido-N(1)-(5-O-phospho-beta-D-ribosyl)acetamidine + L-glutamate + ADP + phosphate + H(+). It carries out the reaction L-glutamine + H2O = L-glutamate + NH4(+). Its pathway is purine metabolism; IMP biosynthesis via de novo pathway; 5-amino-1-(5-phospho-D-ribosyl)imidazole from N(2)-formyl-N(1)-(5-phospho-D-ribosyl)glycinamide: step 1/2. Functionally, part of the phosphoribosylformylglycinamidine synthase complex involved in the purines biosynthetic pathway. Catalyzes the ATP-dependent conversion of formylglycinamide ribonucleotide (FGAR) and glutamine to yield formylglycinamidine ribonucleotide (FGAM) and glutamate. The FGAM synthase complex is composed of three subunits. PurQ produces an ammonia molecule by converting glutamine to glutamate. PurL transfers the ammonia molecule to FGAR to form FGAM in an ATP-dependent manner. PurS interacts with PurQ and PurL and is thought to assist in the transfer of the ammonia molecule from PurQ to PurL. The sequence is that of Phosphoribosylformylglycinamidine synthase subunit PurQ from Rubrobacter xylanophilus (strain DSM 9941 / JCM 11954 / NBRC 16129 / PRD-1).